The chain runs to 571 residues: Potassium-transporting ATPase potassium-binding subunit (571 aa).

12 consecutive transmembrane segments (helical) span residues 5-25, 60-80, 86-106, 131-151, 177-197, 247-267, 291-311, 334-354, 386-406, 425-445, 498-518, and 547-567; these read LAAGLQVAFVLAVLAVAYVPV, YGYAGSVLGFSTASVLFLYAL, VLPLSGDLSGVSPAVAFNTAV, GLAVQNFVSAAVGMAVAVALI, ILLPFSFVIALILLSQGVIQS, PTPVSNIVEILAILLIPVSLT, LTLLAVMGILWGSLLAVTLAA, FGIPGTALFAVSTTGTSTGAV, GLYGILVLALIAVFVGGLLVG, ALSVLVMPALVLIGTGITVIL, ALGLCMLFGRFLPIIFVLALA, and GTVVLVAALTFFPALALGPIA.

The protein belongs to the KdpA family. The system is composed of three essential subunits: KdpA, KdpB and KdpC.

The protein localises to the cell membrane. Functionally, part of the high-affinity ATP-driven potassium transport (or Kdp) system, which catalyzes the hydrolysis of ATP coupled with the electrogenic transport of potassium into the cytoplasm. This subunit binds the extracellular potassium ions and delivers the ions to the membrane domain of KdpB through an intramembrane tunnel. The polypeptide is Potassium-transporting ATPase potassium-binding subunit (Rhodococcus jostii (strain RHA1)).